The primary structure comprises 258 residues: Large ribosomal subunit protein uL3 (258 aa).

Belongs to the universal ribosomal protein uL3 family. Part of the 50S ribosomal subunit. Forms a cluster with proteins L14 and L19.

In terms of biological role, one of the primary rRNA binding proteins, it binds directly near the 3'-end of the 23S rRNA, where it nucleates assembly of the 50S subunit. The chain is Large ribosomal subunit protein uL3 from Spiroplasma kunkelii.